Reading from the N-terminus, the 793-residue chain is Probable alpha-fucosidase A (793 aa).

Residues 1 to 20 (MLISGSSAALCALALPFAAA) form the signal peptide. N-linked (GlcNAc...) asparagine glycans are attached at residues Asn30, Asn83, Asn100, Asn104, Asn123, Asn179, Asn199, Asn234, Asn323, Asn597, Asn622, Asn660, and Asn757.

The protein belongs to the glycosyl hydrolase 95 family.

It is found in the secreted. The catalysed reaction is an alpha-L-fucoside + H2O = L-fucose + an alcohol. Functionally, alpha-fucosidase involved in degradation of fucosylated xyloglucans. Hydrolyzes alpha-1,2-linked fucose. This is Probable alpha-fucosidase A (afcA) from Aspergillus niger (strain ATCC MYA-4892 / CBS 513.88 / FGSC A1513).